Consider the following 979-residue polypeptide: Protein argonaute PNH1 (979 aa).

The tract at residues 1–95 is disordered; sequence MLEVLDMAPP…GGRAGAGPGP (95 aa). Over residues 54–67 the composition is skewed to low complexity; sequence AETAAATAAVAPPE. The segment covering 77-86 has biased composition (basic residues); it reads GRRRGGRGRG. One can recognise a PAZ domain in the interval 333-446; that stretch reads PVIEFVAQIL…LPMEACKIVE (114 aa). Residues 620–941 form the Piwi domain; the sequence is LLLAILPDNN…AAFRARFYME (322 aa).

This sequence belongs to the argonaute family. Ago subfamily.

The protein resides in the cytoplasm. Probably involved in the RNA silencing pathway. May bind to short RNAs such as microRNAs (miRNAs) or short interfering RNAs (siRNAs), and represses the translation of mRNAs which are complementary to them. Plays a role in the maintenance of the indeterminate state of the stem cells in the shoot apical meristem (SAM). Regulates leaf formation through vascular development and may be involved in determining the central domain of the leaf founder region. This chain is Protein argonaute PNH1 (PHN1), found in Oryza sativa subsp. japonica (Rice).